Here is a 314-residue protein sequence, read N- to C-terminus: 4-hydroxy-3-methylbut-2-enyl diphosphate reductase (314 aa).

C12 is a binding site for [4Fe-4S] cluster. (2E)-4-hydroxy-3-methylbut-2-enyl diphosphate is bound by residues H41 and H74. The dimethylallyl diphosphate site is built by H41 and H74. The isopentenyl diphosphate site is built by H41 and H74. C96 lines the [4Fe-4S] cluster pocket. H124 is a (2E)-4-hydroxy-3-methylbut-2-enyl diphosphate binding site. Position 124 (H124) interacts with dimethylallyl diphosphate. H124 lines the isopentenyl diphosphate pocket. E126 (proton donor) is an active-site residue. T167 serves as a coordination point for (2E)-4-hydroxy-3-methylbut-2-enyl diphosphate. C197 contacts [4Fe-4S] cluster. (2E)-4-hydroxy-3-methylbut-2-enyl diphosphate contacts are provided by S225, S226, N227, and S269. Dimethylallyl diphosphate is bound by residues S225, S226, N227, and S269. Isopentenyl diphosphate contacts are provided by S225, S226, N227, and S269.

Belongs to the IspH family. [4Fe-4S] cluster serves as cofactor.

It catalyses the reaction isopentenyl diphosphate + 2 oxidized [2Fe-2S]-[ferredoxin] + H2O = (2E)-4-hydroxy-3-methylbut-2-enyl diphosphate + 2 reduced [2Fe-2S]-[ferredoxin] + 2 H(+). The enzyme catalyses dimethylallyl diphosphate + 2 oxidized [2Fe-2S]-[ferredoxin] + H2O = (2E)-4-hydroxy-3-methylbut-2-enyl diphosphate + 2 reduced [2Fe-2S]-[ferredoxin] + 2 H(+). It functions in the pathway isoprenoid biosynthesis; dimethylallyl diphosphate biosynthesis; dimethylallyl diphosphate from (2E)-4-hydroxy-3-methylbutenyl diphosphate: step 1/1. The protein operates within isoprenoid biosynthesis; isopentenyl diphosphate biosynthesis via DXP pathway; isopentenyl diphosphate from 1-deoxy-D-xylulose 5-phosphate: step 6/6. Functionally, catalyzes the conversion of 1-hydroxy-2-methyl-2-(E)-butenyl 4-diphosphate (HMBPP) into a mixture of isopentenyl diphosphate (IPP) and dimethylallyl diphosphate (DMAPP). Acts in the terminal step of the DOXP/MEP pathway for isoprenoid precursor biosynthesis. This chain is 4-hydroxy-3-methylbut-2-enyl diphosphate reductase, found in Actinobacillus pleuropneumoniae serotype 3 (strain JL03).